The primary structure comprises 842 residues: Protein translocase subunit SecA (842 aa).

Residues Gln85, 103–107 (GEGKT), and Asp493 each bind ATP. The Zn(2+) site is built by Cys825, Cys827, Cys836, and His837.

This sequence belongs to the SecA family. As to quaternary structure, monomer and homodimer. Part of the essential Sec protein translocation apparatus which comprises SecA, SecYEG and auxiliary proteins SecDF. Other proteins may also be involved. Zn(2+) is required as a cofactor.

It is found in the cell membrane. The protein resides in the cytoplasm. It catalyses the reaction ATP + H2O + cellular proteinSide 1 = ADP + phosphate + cellular proteinSide 2.. Part of the Sec protein translocase complex. Interacts with the SecYEG preprotein conducting channel. Has a central role in coupling the hydrolysis of ATP to the transfer of proteins into and across the cell membrane, serving as an ATP-driven molecular motor driving the stepwise translocation of polypeptide chains across the membrane. This is Protein translocase subunit SecA from Streptococcus equi subsp. zooepidemicus (strain MGCS10565).